Reading from the N-terminus, the 351-residue chain is Mitochondrial mRNA pseudouridine synthase RPUSD3 (351 aa).

The N-terminal 25 residues, 1–25 (MRAVLAREMDGRRVLGRFWSGWRRG), are a transit peptide targeting the mitochondrion. Residues 33–58 (EDAGFGTEARHQRQPRGSCQRSGPLG) form a disordered region. Position 71 is a phosphoserine (Ser-71).

It belongs to the pseudouridine synthase RluA family. In terms of assembly, forms a regulatory protein-RNA complex, consisting of RCC1L, NGRN, RPUSD3, RPUSD4, TRUB2, FASTKD2 and 16S mt-rRNA.

Its subcellular location is the mitochondrion matrix. It carries out the reaction a uridine in mRNA = a pseudouridine in mRNA. Catalyzes uridine to pseudouridine isomerization (pseudouridylation) of specific mitochondrial mRNAs (mt-mRNAs), a post-transcriptional modification necessary for their translation. Acts at position 390 in COXI mt-mRNA and at position 697-699 in mitochondrial COXIII mt-mRNA. As a component of a functional protein-RNA module, consisting of RCC1L, NGRN, RPUSD3, RPUSD4, TRUB2, FASTKD2 and 16S mitochondrial ribosomal RNA (16S mt-rRNA), controls 16S mt-rRNA abundance and may play a role in mitochondrial ribosome biogenesis. The chain is Mitochondrial mRNA pseudouridine synthase RPUSD3 from Homo sapiens (Human).